The following is an 813-amino-acid chain: DNA ligase (813 aa).

NAD(+) is bound by residues 41–45 (DAEYD), 90–91 (SI), and E127. K129 acts as the N6-AMP-lysine intermediate in catalysis. 4 residues coordinate NAD(+): R150, E189, K307, and K331. Zn(2+) is bound by residues C440, C443, C458, and C464. The BRCT domain occupies 729 to 813 (AEEGALSGKT…LLQNPPGDSA (85 aa)).

It belongs to the NAD-dependent DNA ligase family. LigA subfamily. Mg(2+) serves as cofactor. It depends on Mn(2+) as a cofactor.

The catalysed reaction is NAD(+) + (deoxyribonucleotide)n-3'-hydroxyl + 5'-phospho-(deoxyribonucleotide)m = (deoxyribonucleotide)n+m + AMP + beta-nicotinamide D-nucleotide.. In terms of biological role, DNA ligase that catalyzes the formation of phosphodiester linkages between 5'-phosphoryl and 3'-hydroxyl groups in double-stranded DNA using NAD as a coenzyme and as the energy source for the reaction. It is essential for DNA replication and repair of damaged DNA. In Ralstonia nicotianae (strain ATCC BAA-1114 / GMI1000) (Ralstonia solanacearum), this protein is DNA ligase.